Here is a 134-residue protein sequence, read N- to C-terminus: uncharacterized protein (134 aa).

Helical transmembrane passes span 26–46 (VAVF…GNIG), 55–75 (LLKF…QIIV), and 101–121 (YAPM…GLIL).

Its subcellular location is the membrane. This is an uncharacterized protein from Dictyostelium discoideum (Social amoeba).